The following is a 376-amino-acid chain: Formate dehydrogenase 2 (376 aa).

Residues Val97 and Asn121 each contribute to the substrate site. NAD(+)-binding positions include 176–177 (RI), Asp197, 244–248 (PLHKD), Thr270, Asp296, and 325–328 (HISG).

This sequence belongs to the D-isomer specific 2-hydroxyacid dehydrogenase family. FDH subfamily. Homodimer.

Its subcellular location is the cytoplasm. The enzyme catalyses formate + NAD(+) = CO2 + NADH. Its function is as follows. Catalyzes the NAD(+)-dependent oxidation of formate to carbon dioxide. Formate oxidation is the final step in the methanol oxidation pathway in methylotrophic microorganisms. Has a role in the detoxification of exogenous formate in non-methylotrophic organisms. The polypeptide is Formate dehydrogenase 2 (FDH2) (Saccharomyces cerevisiae (strain CEN.PK113-7D) (Baker's yeast)).